The primary structure comprises 394 residues: DNA replication and repair protein RecF (394 aa).

Residue 30–37 coordinates ATP; that stretch reads GPNAAGKT.

The protein belongs to the RecF family.

It is found in the cytoplasm. Functionally, the RecF protein is involved in DNA metabolism; it is required for DNA replication and normal SOS inducibility. RecF binds preferentially to single-stranded, linear DNA. It also seems to bind ATP. This is DNA replication and repair protein RecF from Roseiflexus castenholzii (strain DSM 13941 / HLO8).